The chain runs to 412 residues: Transcription factor NIGT1 (412 aa).

Disordered stretches follow at residues 54–241 (MDAA…RCWA), 286–310 (KYRLHTRRPSSTGQSSAAAGVPAPP), and 358–412 (AMLP…TTSA). Over residues 90–112 (ESTHADAAKSGKKEEAETSERHS) the composition is skewed to basic and acidic residues. The segment covering 183–193 (ASSTTAAASST) has biased composition (low complexity). Residues 198-228 (SGDKPTDDDTEKHMETDKDNDKDAKDKDKEG) show a composition bias toward basic and acidic residues. Residues 232-292 (PHRKPRRCWA…HLQKYRLHTR (61 aa)) form the HTH myb-type domain. Residues 263–288 (PKQIRELMKVDGLTNDEVKSHLQKYR) constitute a DNA-binding region (H-T-H motif). A compositionally biased stretch (basic and acidic residues) spans 383-392 (SGSEGRRSGD). Residues 395 to 412 (DGSSSSPAVSSSSQTTSA) are compositionally biased toward low complexity.

It localises to the nucleus. In terms of biological role, transcriptional repressor that may play a role in response to nitrogen. May be involved in a time-dependent signaling for transcriptional regulation of nitrate-responsive genes. Binds specifically to the DNA sequence motif 5'-GAATC-3' or 5'-GAATATTC-3'. Represses the activity of its own promoter trough binding to these motifs. The chain is Transcription factor NIGT1 from Oryza sativa subsp. japonica (Rice).